We begin with the raw amino-acid sequence, 44 residues long: Photosystem I reaction center subunit IX (44 aa).

A helical transmembrane segment spans residues Tyr7 to Ile27.

Belongs to the PsaJ family.

It localises to the plastid. It is found in the chloroplast thylakoid membrane. May help in the organization of the PsaE and PsaF subunits. This Barbarea verna (Land cress) protein is Photosystem I reaction center subunit IX.